The following is a 273-amino-acid chain: Dermonecrotic toxin LsaSicTox-alphaIB1bii (273 aa).

Residue His-5 is part of the active site. Positions 25 and 27 each coordinate Mg(2+). The Nucleophile role is filled by His-41. Disulfide bonds link Cys-45–Cys-51 and Cys-47–Cys-190. Residue Asp-85 participates in Mg(2+) binding.

It belongs to the arthropod phospholipase D family. Class II subfamily. It depends on Mg(2+) as a cofactor. As to expression, expressed by the venom gland.

The protein localises to the secreted. The enzyme catalyses an N-(acyl)-sphingosylphosphocholine = an N-(acyl)-sphingosyl-1,3-cyclic phosphate + choline. It carries out the reaction an N-(acyl)-sphingosylphosphoethanolamine = an N-(acyl)-sphingosyl-1,3-cyclic phosphate + ethanolamine. The catalysed reaction is a 1-acyl-sn-glycero-3-phosphocholine = a 1-acyl-sn-glycero-2,3-cyclic phosphate + choline. It catalyses the reaction a 1-acyl-sn-glycero-3-phosphoethanolamine = a 1-acyl-sn-glycero-2,3-cyclic phosphate + ethanolamine. In terms of biological role, dermonecrotic toxins cleave the phosphodiester linkage between the phosphate and headgroup of certain phospholipids (sphingolipid and lysolipid substrates), forming an alcohol (often choline) and a cyclic phosphate. This toxin acts on sphingomyelin (SM). It may also act on ceramide phosphoethanolamine (CPE), lysophosphatidylcholine (LPC) and lysophosphatidylethanolamine (LPE), but not on lysophosphatidylserine (LPS), and lysophosphatidylglycerol (LPG). It acts by transphosphatidylation, releasing exclusively cyclic phosphate products as second products. Induces dermonecrosis, hemolysis, increased vascular permeability, edema, inflammatory response, and platelet aggregation. The sequence is that of Dermonecrotic toxin LsaSicTox-alphaIB1bii from Loxosceles sabina (Tucson recluse spider).